Consider the following 97-residue polypeptide: uncharacterized protein (97 aa).

This is an uncharacterized protein from Enterobacteria phage T4 (Bacteriophage T4).